Consider the following 72-residue polypeptide: Translational regulator CsrA (72 aa).

Belongs to the CsrA/RsmA family. As to quaternary structure, homodimer; the beta-strands of each monomer intercalate to form a hydrophobic core, while the alpha-helices form wings that extend away from the core.

The protein resides in the cytoplasm. A translational regulator that binds mRNA to regulate translation initiation and/or mRNA stability. Usually binds in the 5'-UTR at or near the Shine-Dalgarno sequence preventing ribosome-binding, thus repressing translation. Its main target seems to be the major flagellin gene, while its function is anatagonized by FliW. In Agathobacter rectalis (strain ATCC 33656 / DSM 3377 / JCM 17463 / KCTC 5835 / VPI 0990) (Eubacterium rectale), this protein is Translational regulator CsrA.